We begin with the raw amino-acid sequence, 491 residues long: Calcium/calmodulin-dependent protein kinase type II delta 1 chain (491 aa).

The region spanning 13-271 (YQLYEELGKG…AAEALKHPWI (259 aa)) is the Protein kinase domain. ATP-binding positions include 19–27 (LGKGAFSVV) and K42. D135 functions as the Proton acceptor in the catalytic mechanism. Position 286 is a phosphothreonine (T286). Phosphoserine is present on S314. Residues 315–354 (SKNPYKKPDGVKEPQTTVIHNPTDGNKESSESTNTTIEDE) are disordered. Positions 328–338 (PQTTVIHNPTD) are enriched in polar residues. T350 carries the phosphothreonine modification.

Belongs to the protein kinase superfamily. CAMK Ser/Thr protein kinase family. CaMK subfamily. In terms of assembly, CAMK2 is composed of four different chains: alpha, beta, gamma, and delta. The different isoforms assemble into homo- or heteromultimeric holoenzymes composed of 8 to 12 subunits. In terms of tissue distribution, first detected at the 18-somite stage where expression is restricted to somite boundaries. At 24 hpf, expression is elevated in epidermal tissue and in the hatching gland. After 24 hpf, expression dimishes, but persists at low levels along the dorsal trunk. At 48 hpf, expression is restricted at a low level to the forebrain. At 72 hpf, weak expression reappears along the entire dorsal trunk in discrete cell bodies.

It carries out the reaction L-seryl-[protein] + ATP = O-phospho-L-seryl-[protein] + ADP + H(+). It catalyses the reaction L-threonyl-[protein] + ATP = O-phospho-L-threonyl-[protein] + ADP + H(+). Its activity is regulated as follows. Autophosphorylation of CAMK2 plays an important role in the regulation of the kinase activity. Functionally, caM-kinase II (CAMK2) is a prominent kinase in the central nervous system. This Danio rerio (Zebrafish) protein is Calcium/calmodulin-dependent protein kinase type II delta 1 chain.